A 589-amino-acid polypeptide reads, in one-letter code: Arginine--tRNA ligase (589 aa).

The short motif at 131–141 (ANPTGPLHVGH) is the 'HIGH' region element.

Belongs to the class-I aminoacyl-tRNA synthetase family. As to quaternary structure, monomer.

It localises to the cytoplasm. The catalysed reaction is tRNA(Arg) + L-arginine + ATP = L-arginyl-tRNA(Arg) + AMP + diphosphate. The polypeptide is Arginine--tRNA ligase (Legionella pneumophila subsp. pneumophila (strain Philadelphia 1 / ATCC 33152 / DSM 7513)).